A 347-amino-acid polypeptide reads, in one-letter code: uncharacterized protein (347 aa).

The protein resides in the cytoplasm. Its subcellular location is the nucleus. This is an uncharacterized protein from Schizosaccharomyces pombe (strain 972 / ATCC 24843) (Fission yeast).